A 276-amino-acid chain; its full sequence is Glutamate 5-kinase (276 aa).

Lys14 provides a ligand contact to ATP. Residues Ser54, Asp141, and Asn157 each coordinate substrate. ATP is bound by residues 177–178 (SD) and 219–225 (TGGMLTK).

It belongs to the glutamate 5-kinase family.

It is found in the cytoplasm. It carries out the reaction L-glutamate + ATP = L-glutamyl 5-phosphate + ADP. It participates in amino-acid biosynthesis; L-proline biosynthesis; L-glutamate 5-semialdehyde from L-glutamate: step 1/2. Catalyzes the transfer of a phosphate group to glutamate to form L-glutamate 5-phosphate. The polypeptide is Glutamate 5-kinase (Listeria monocytogenes serovar 1/2a (strain ATCC BAA-679 / EGD-e)).